A 286-amino-acid chain; its full sequence is 4-hydroxybenzoate octaprenyltransferase (286 aa).

8 helical membrane-spanning segments follow: residues 20–40 (IGTL…AGGM), 43–63 (LKVL…GCII), 96–116 (LFVI…GLVV), 142–162 (FLGV…TGEV), 167–187 (WWLF…YAMV), 210–230 (QIIG…GWSA), 235–255 (VYGL…MLIF), and 266–286 (FLNN…DYLF).

The protein belongs to the UbiA prenyltransferase family. Requires Mg(2+) as cofactor.

It is found in the cell inner membrane. The catalysed reaction is all-trans-octaprenyl diphosphate + 4-hydroxybenzoate = 4-hydroxy-3-(all-trans-octaprenyl)benzoate + diphosphate. It participates in cofactor biosynthesis; ubiquinone biosynthesis. In terms of biological role, catalyzes the prenylation of para-hydroxybenzoate (PHB) with an all-trans polyprenyl group. Mediates the second step in the final reaction sequence of ubiquinone-8 (UQ-8) biosynthesis, which is the condensation of the polyisoprenoid side chain with PHB, generating the first membrane-bound Q intermediate 3-octaprenyl-4-hydroxybenzoate. This Shewanella oneidensis (strain ATCC 700550 / JCM 31522 / CIP 106686 / LMG 19005 / NCIMB 14063 / MR-1) protein is 4-hydroxybenzoate octaprenyltransferase.